The primary structure comprises 37 residues: Large ribosomal subunit protein bL36 (37 aa).

Belongs to the bacterial ribosomal protein bL36 family.

This Nostoc punctiforme (strain ATCC 29133 / PCC 73102) protein is Large ribosomal subunit protein bL36.